The primary structure comprises 214 residues: MTVLVKHLGVVDYVSTYEVMRAFTKERNSTTPDEIWILEHPPVFTLGLAGDAGNLHSPSNQIPLVQVDRGGEITYHGPGQIVVYLLLDLKRLGIFVKELVSRIEQALINTLADFGLVAERRSGAPGIYVSLQPGISPEWIGAKVAALGLKVSKSCSYHGLALNVATDLEAFGRIHPCGYEGLKTVDMQTLGIKDNIDTISQRLLEHLQKQLMPT.

The 186-residue stretch at 29–214 (STTPDEIWIL…EHLQKQLMPT (186 aa)) folds into the BPL/LPL catalytic domain. Substrate-binding positions include 69–76 (RGGEITYH), 146–148 (ALG), and 159–161 (GLA). The Acyl-thioester intermediate role is filled by cysteine 177.

The protein belongs to the LipB family.

Its subcellular location is the cytoplasm. It catalyses the reaction octanoyl-[ACP] + L-lysyl-[protein] = N(6)-octanoyl-L-lysyl-[protein] + holo-[ACP] + H(+). It functions in the pathway protein modification; protein lipoylation via endogenous pathway; protein N(6)-(lipoyl)lysine from octanoyl-[acyl-carrier-protein]: step 1/2. Its function is as follows. Catalyzes the transfer of endogenously produced octanoic acid from octanoyl-acyl-carrier-protein onto the lipoyl domains of lipoate-dependent enzymes. Lipoyl-ACP can also act as a substrate although octanoyl-ACP is likely to be the physiological substrate. This Polynucleobacter asymbioticus (strain DSM 18221 / CIP 109841 / QLW-P1DMWA-1) (Polynucleobacter necessarius subsp. asymbioticus) protein is Octanoyltransferase.